The chain runs to 568 residues: PTS system lactose-specific EIICB component (568 aa).

The PTS EIIC type-3 domain maps to 8–409 (IEKGKPFFEK…LVDTVIYYPF (402 aa)). 10 consecutive transmembrane segments (helical) span residues 30-50 (GFIS…IAYV), 65-85 (MLMT…AGTT), 103-123 (INFI…AADP), 128-148 (GFLS…AAFI), 183-203 (FAFS…VIGV), 222-242 (GYLG…VGIH), 246-266 (IVEP…AHLI), 283-303 (FIVT…FMWL), 339-359 (VFFI…KFFV), and 381-401 (IVLG…LILV). The PTS EIIB type-3 domain maps to 465–568 (ETNVLVLCAG…LAFVEEQFKD (104 aa)). The Phosphocysteine intermediate; for EIIB activity role is filled by Cys472. At Cys472 the chain carries Phosphocysteine; by EIIA.

The protein localises to the cell membrane. The enzyme catalyses lactose(out) + N(pros)-phospho-L-histidyl-[protein] = lactose 6-phosphate(in) + L-histidyl-[protein]. In terms of biological role, the phosphoenolpyruvate-dependent sugar phosphotransferase system (sugar PTS), a major carbohydrate active transport system, catalyzes the phosphorylation of incoming sugar substrates concomitantly with their translocation across the cell membrane. The enzyme II LacEF PTS system is involved in lactose transport. The sequence is that of PTS system lactose-specific EIICB component from Streptococcus mutans serotype c (strain ATCC 700610 / UA159).